The sequence spans 78 residues: Molt-inhibiting hormone (78 aa).

Cystine bridges form between Cys7-Cys44, Cys24-Cys40, and Cys27-Cys53.

It is found in the secreted. Its function is as follows. Inhibits Y-organs where molting hormone (ecdysteroid) is secreted. A molting cycle is initiated when MIH secretion diminishes or stops. Also has significant hyperglycemic hormone (CHH) activity. This chain is Molt-inhibiting hormone, found in Cancer pagurus (Rock crab).